The primary structure comprises 172 residues: Putative Dresden prostate carcinoma protein 2 (172 aa).

Residues 40–61 (QCEEEEAMTPRPTKARAPLPSA) are disordered.

As to expression, very high expression in prostate and prostate cancer. Faint expression in other tissues.

This is Putative Dresden prostate carcinoma protein 2 (HMGN2P46) from Homo sapiens (Human).